The chain runs to 354 residues: Serum paraoxonase/lactonase 3 (354 aa).

A disulfide bridge links C42 with C352. N50 is a glycosylation site (N-linked (GlcNAc...) asparagine). Ca(2+) contacts are provided by E53 and D54. Residue H114 is the Proton acceptor of the active site. I116 is a binding site for Ca(2+). Position 165 is a phosphoserine (S165). The Ca(2+) site is built by N167, N168, N223, D268, and N269. N269 carries N-linked (GlcNAc...) asparagine glycosylation.

This sequence belongs to the paraoxonase family. As to quaternary structure, homodimer. Ca(2+) serves as cofactor. Post-translationally, glycosylated. In terms of processing, the signal sequence is not cleaved.

It is found in the secreted. The protein localises to the extracellular space. It catalyses the reaction a phenyl acetate + H2O = a phenol + acetate + H(+). The catalysed reaction is An aryl dialkyl phosphate + H2O = dialkyl phosphate + an aryl alcohol.. It carries out the reaction an N-acyl-L-homoserine lactone + H2O = an N-acyl-L-homoserine + H(+). Has low activity towards the organophosphate paraxon and aromatic carboxylic acid esters. Rapidly hydrolyzes lactones such as statin prodrugs (e.g. lovastatin). Hydrolyzes aromatic lactones and 5- or 6-member ring lactones with aliphatic substituents but not simple lactones or those with polar substituents. This chain is Serum paraoxonase/lactonase 3 (PON3), found in Oryctolagus cuniculus (Rabbit).